A 312-amino-acid chain; its full sequence is Olfactory receptor 6B2 (312 aa).

The Extracellular segment spans residues 1–25 (MSGENVTKVSTFILVGLPTAPGLQY). An N-linked (GlcNAc...) asparagine glycan is attached at Asn-5. A helical membrane pass occupies residues 26-46 (LLFLLFLLTYLFVLVENLAII). The Cytoplasmic segment spans residues 47–54 (LIVWSSTS). Residues 55 to 75 (LHRPMYYFLSSMSFLEIWYVS) traverse the membrane as a helical segment. The Extracellular segment spans residues 76 to 99 (DITPKMLEGFLLQQKRISFVGCMT). A disulfide bridge connects residues Cys-97 and Cys-189. The helical transmembrane segment at 100–120 (QLYFFSSLVCTECVLLASMAY) threads the bilayer. Topologically, residues 121-139 (DRYVAICHPLRYHVLVTPG) are cytoplasmic. The chain crosses the membrane as a helical span at residues 140–160 (LCLQLVGFSFVSGFTISMIKV). Over 161–196 (CFISSVTFCGSNVLNHFFCDISPILKLACTDFSTAE) the chain is Extracellular. A helical membrane pass occupies residues 197–217 (LVDFILAFIILVFPLLATILS). At 218-237 (YWHITLAVLRIPSATGCWRA) the chain is on the cytoplasmic side. Residues 238–258 (FSTCASHLTVVTVFYTALLFM) traverse the membrane as a helical segment. The Extracellular segment spans residues 259 to 271 (YVRPQAIDSQSSN). A helical membrane pass occupies residues 272–292 (KLISAVYTVVTPIINPLIYCL). Topologically, residues 293-312 (RNKEFKDALKKALGLGQTSH) are cytoplasmic.

Belongs to the G-protein coupled receptor 1 family.

Its subcellular location is the cell membrane. Functionally, odorant receptor. This is Olfactory receptor 6B2 (OR6B2) from Homo sapiens (Human).